The primary structure comprises 581 residues: Phosphoglucomutase, cytoplasmic (581 aa).

Residues 1–11 (MVFSVAKKDTT) show a composition bias toward basic and acidic residues. Residues 1–20 (MVFSVAKKDTTPYEGQKPGT) form a disordered region. The alpha-D-glucose 1,6-bisphosphate site is built by arginine 24 and serine 123. Residue serine 123 is the Phosphoserine intermediate of the active site. The Mg(2+) site is built by serine 123, aspartate 298, aspartate 300, and aspartate 302. Serine 123 carries the phosphoserine modification. Alpha-D-glucose 1,6-bisphosphate-binding residues include aspartate 302, arginine 303, threonine 366, glutamate 385, serine 387, and lysine 398.

The protein belongs to the phosphohexose mutase family. In terms of assembly, monomer. Mg(2+) serves as cofactor.

Its subcellular location is the cytoplasm. The enzyme catalyses alpha-D-glucose 1-phosphate = alpha-D-glucose 6-phosphate. It carries out the reaction O-phospho-L-seryl-[protein] + alpha-D-glucose 1-phosphate = alpha-D-glucose 1,6-bisphosphate + L-seryl-[protein]. The catalysed reaction is alpha-D-glucose 1,6-bisphosphate + L-seryl-[protein] = O-phospho-L-seryl-[protein] + alpha-D-glucose 6-phosphate. In terms of biological role, catalyzes the reversible isomerization of alpha-D-glucose 1-phosphate to alpha-D-glucose 6-phosphate. The mechanism proceeds via the intermediate compound alpha-D-glucose 1,6-bisphosphate. This enzyme participates in both the breakdown and synthesis of glucose. This Bromus inermis (Smooth brome grass) protein is Phosphoglucomutase, cytoplasmic (PGM1).